A 37-amino-acid chain; its full sequence is Photosystem I reaction center subunit IX (37 aa).

The helical transmembrane segment at 4-24 (FLTTAPVVAAIWFTLTAGILI) threads the bilayer.

This sequence belongs to the PsaJ family.

The protein localises to the cellular thylakoid membrane. In terms of biological role, may help in the organization of the PsaE and PsaF subunits. The polypeptide is Photosystem I reaction center subunit IX (Synechococcus sp. (strain WH7803)).